The following is a 310-amino-acid chain: Glutarate 2-hydroxylase (310 aa).

Histidine 160, aspartate 162, and histidine 277 together coordinate Fe cation.

This sequence belongs to the glutarate hydroxylase family. In terms of assembly, homotetramer. Fe(2+) is required as a cofactor.

The catalysed reaction is glutarate + 2-oxoglutarate + O2 = (S)-2-hydroxyglutarate + succinate + CO2. It participates in amino-acid degradation. Acts as an alpha-ketoglutarate-dependent dioxygenase catalyzing hydroxylation of glutarate (GA) to L-2-hydroxyglutarate (L2HG). Functions in a L-lysine degradation pathway that proceeds via cadaverine, glutarate and L-2-hydroxyglutarate. In Shigella flexneri, this protein is Glutarate 2-hydroxylase.